A 472-amino-acid chain; its full sequence is Protein translocase subunit SecD (472 aa).

6 helical membrane-spanning segments follow: residues 7–27 (LLLL…KLPL), 298–318 (LVAG…YYRL), 326–345 (SLMI…GVTL), 349–368 (GIAG…VLIF), 392–414 (AFSS…FWFG), and 432–452 (SLFT…LSLP).

It belongs to the SecD/SecF family. SecD subfamily. In terms of assembly, forms a complex with SecF. Part of the essential Sec protein translocation apparatus which comprises SecA, SecYEG and auxiliary proteins SecDF. Other proteins may also be involved.

The protein resides in the cell inner membrane. Functionally, part of the Sec protein translocase complex. Interacts with the SecYEG preprotein conducting channel. SecDF uses the proton motive force (PMF) to complete protein translocation after the ATP-dependent function of SecA. Its function is as follows. Probably participates in protein translocation into and across both the cytoplasmic and thylakoid membranes in cyanobacterial cells. This chain is Protein translocase subunit SecD, found in Synechocystis sp. (strain ATCC 27184 / PCC 6803 / Kazusa).